The primary structure comprises 556 residues: Polypeptide N-acetylgalactosaminyltransferase 13 (556 aa).

Topologically, residues 1 to 4 (MRRF) are cytoplasmic. The helical; Signal-anchor for type II membrane protein transmembrane segment at 5–27 (VYCKVVLATSLMWVLVDVFLLLY) threads the bilayer. At 28 to 556 (FSECNKCDDK…WLLRNMTLGT (529 aa)) the chain is on the lumenal side. 2 N-linked (GlcNAc...) asparagine glycosylation sites follow: Asn-94 and Asn-116. 5 disulfides stabilise this stretch: Cys-105/Cys-338, Cys-329/Cys-407, Cys-441/Cys-458, Cys-481/Cys-496, and Cys-522/Cys-539. Residues 114–224 (LPNTSVVIVF…LGWLEPLLAR (111 aa)) are catalytic subdomain A. Substrate contacts are provided by Asp-155 and Arg-185. Positions 208 and 210 each coordinate Mn(2+). Positions 284-346 (PVRTPTMAGG…TCSHVGHVFR (63 aa)) are catalytic subdomain B. Residue Trp-315 coordinates substrate. His-343 contributes to the Mn(2+) binding site. The substrate site is built by Arg-346 and Tyr-351. Positions 428-550 (YSLGEIRNVE…GSRSQQWLLR (123 aa)) constitute a Ricin B-type lectin domain. Asn-551 carries N-linked (GlcNAc...) asparagine glycosylation.

The protein belongs to the glycosyltransferase 2 family. GalNAc-T subfamily. The cofactor is Mn(2+). As to expression, specifically expressed in neuronal cells. Expressed in fetal brain, whole adult brain, cerebral cortex and cerebellum. Not expressed in other tissues tested.

It localises to the golgi apparatus membrane. It carries out the reaction L-seryl-[protein] + UDP-N-acetyl-alpha-D-galactosamine = a 3-O-[N-acetyl-alpha-D-galactosaminyl]-L-seryl-[protein] + UDP + H(+). It catalyses the reaction L-threonyl-[protein] + UDP-N-acetyl-alpha-D-galactosamine = a 3-O-[N-acetyl-alpha-D-galactosaminyl]-L-threonyl-[protein] + UDP + H(+). The protein operates within protein modification; protein glycosylation. In terms of biological role, catalyzes the initial reaction in O-linked oligosaccharide biosynthesis, the transfer of an N-acetyl-D-galactosamine (GalNAc) residue from UDP-GalNAc to a serine or threonine residue on the protein receptor. Generates GalNAc-O-Ser/Thr structure also known as Tn antigen, which itself is immunogenic but also serves as a precursor for the synthesis of different mucin-type O-glycan core structures. Contributes to the synthesis of O-linked glycans on mucins and proteoglycans of the central nervous system. May promote neurogenesis through glycosylation and stabilization of PDPN. Can glycosylate both unmodified peptides and glycopeptides that already contain an O-linked GalNAc sugar. Transfers GalNAc to Thr-/Ser-rich tandem repeats GTTPSPVPTTSTTSAP of MUC5AC, specifically on Thr-3 of non-glycosylated MUC5AC peptide, on Thr-12 and Thr-13 of preglycosylated MUC5AC at Thr-3 (MUC5AC-3), on Thr-3 of preglycosylated MUC5AC at Thr-13 (MUC5AC-13) and on Thr-12 of preglycosylated MUC5AC at Thr-3 and Thr-13 (MUC5AC-3,13). Transfers GalNAc to three consecutive serine/threonine residues on SDC3 forming a triplet-Tn epitope expressed in Purkinje cells of the developing brain. Its function is as follows. Can glycosylate both unmodified peptides and glycopeptides that already contain an O-linked GalNAc sugar. Transfers GalNAc to Thr-/Ser-rich tandem repeats GTTPSPVPTTSTTSAP of MUC5AC, specifically on Thr-3 of non-glycosylated MUC5AC peptide, on Thr-12 and Thr-13 of preglycosylated MUC5AC at Thr-3 (MUC5AC-3), on Thr-3 of preglycosylated MUC5AC at Thr-13 (MUC5AC-13) and on Thr-12 of preglycosylated MUC5AC at Thr-3 and Thr-13 (MUC5AC-3,13). This chain is Polypeptide N-acetylgalactosaminyltransferase 13 (GALNT13), found in Homo sapiens (Human).